The following is a 60-amino-acid chain: UPF0434 protein ESA_02427 (60 aa).

Belongs to the UPF0434 family.

The sequence is that of UPF0434 protein ESA_02427 from Cronobacter sakazakii (strain ATCC BAA-894) (Enterobacter sakazakii).